The following is a 276-amino-acid chain: UPF0276 protein CV_3513 (276 aa).

Belongs to the UPF0276 family.

The sequence is that of UPF0276 protein CV_3513 from Chromobacterium violaceum (strain ATCC 12472 / DSM 30191 / JCM 1249 / CCUG 213 / NBRC 12614 / NCIMB 9131 / NCTC 9757 / MK).